Here is a 935-residue protein sequence, read N- to C-terminus: Protein translocase subunit SecA (935 aa).

ATP is bound by residues Gln-86, 104 to 108, and Asp-494; that span reads GEGKT. The segment at 879 to 935 is disordered; that stretch reads EQAATARAQQHSSAAVAAPEQGATQRGAFGQRVSAADDAAPANRAERRAQKKPTKRH.

The protein belongs to the SecA family. In terms of assembly, monomer and homodimer. Part of the essential Sec protein translocation apparatus which comprises SecA, SecYEG and auxiliary proteins SecDF. Other proteins may also be involved.

Its subcellular location is the cell membrane. It is found in the cytoplasm. It carries out the reaction ATP + H2O + cellular proteinSide 1 = ADP + phosphate + cellular proteinSide 2.. Its function is as follows. Part of the Sec protein translocase complex. Interacts with the SecYEG preprotein conducting channel. Has a central role in coupling the hydrolysis of ATP to the transfer of proteins into and across the cell membrane, serving as an ATP-driven molecular motor driving the stepwise translocation of polypeptide chains across the membrane. This Leifsonia xyli subsp. xyli (strain CTCB07) protein is Protein translocase subunit SecA.